The sequence spans 184 residues: Elongation factor P (184 aa).

This sequence belongs to the elongation factor P family.

It is found in the cytoplasm. The protein operates within protein biosynthesis; polypeptide chain elongation. Its function is as follows. Involved in peptide bond synthesis. Stimulates efficient translation and peptide-bond synthesis on native or reconstituted 70S ribosomes in vitro. Probably functions indirectly by altering the affinity of the ribosome for aminoacyl-tRNA, thus increasing their reactivity as acceptors for peptidyl transferase. This chain is Elongation factor P, found in Polaromonas naphthalenivorans (strain CJ2).